The following is a 693-amino-acid chain: Elongation factor G (693 aa).

Positions 8 to 283 constitute a tr-type G domain; it reads NRIRNIGIAA…AVIDYLPAPT (276 aa). Residues 17–24, 81–85, and 135–138 contribute to the GTP site; these read AHIDAGKT, DTPGH, and NKMD.

Belongs to the TRAFAC class translation factor GTPase superfamily. Classic translation factor GTPase family. EF-G/EF-2 subfamily.

It is found in the cytoplasm. Catalyzes the GTP-dependent ribosomal translocation step during translation elongation. During this step, the ribosome changes from the pre-translocational (PRE) to the post-translocational (POST) state as the newly formed A-site-bound peptidyl-tRNA and P-site-bound deacylated tRNA move to the P and E sites, respectively. Catalyzes the coordinated movement of the two tRNA molecules, the mRNA and conformational changes in the ribosome. The chain is Elongation factor G from Wolinella succinogenes (strain ATCC 29543 / DSM 1740 / CCUG 13145 / JCM 31913 / LMG 7466 / NCTC 11488 / FDC 602W) (Vibrio succinogenes).